A 58-amino-acid chain; its full sequence is UPF0391 membrane protein ABO_0024 (58 aa).

2 helical membrane-spanning segments follow: residues 4–24 (WALT…GGIA) and 28–48 (ASIA…SLVV).

It belongs to the UPF0391 family.

It is found in the cell membrane. The sequence is that of UPF0391 membrane protein ABO_0024 from Alcanivorax borkumensis (strain ATCC 700651 / DSM 11573 / NCIMB 13689 / SK2).